The primary structure comprises 170 residues: S-ribosylhomocysteine lyase (170 aa).

His54, His58, and Cys128 together coordinate Fe cation.

It belongs to the LuxS family. As to quaternary structure, homodimer. Fe cation is required as a cofactor.

The catalysed reaction is S-(5-deoxy-D-ribos-5-yl)-L-homocysteine = (S)-4,5-dihydroxypentane-2,3-dione + L-homocysteine. Functionally, involved in the synthesis of autoinducer 2 (AI-2) which is secreted by bacteria and is used to communicate both the cell density and the metabolic potential of the environment. The regulation of gene expression in response to changes in cell density is called quorum sensing. Catalyzes the transformation of S-ribosylhomocysteine (RHC) to homocysteine (HC) and 4,5-dihydroxy-2,3-pentadione (DPD). This is S-ribosylhomocysteine lyase from Marinomonas sp. (strain MWYL1).